Consider the following 657-residue polypeptide: MGILDTIRNPQDLSKLTEEQLSQLAAEVRSFLIGNVSQTGGHLGPNLGVVELTMAVHRIFDSPRDSIVFDTGHQSYVHKLLTGRQDFSTLRQEGGMSGYPDRGESEHDIVESSHASSSLSWADGISRARQLTGDGDRYVIAVVGDGALTGGMAWEAINNIAADKRRRVVIVVNDNGRSYAPTVGGFADYLASLRPTIDSFRAAPAYEGTLDWWKRKLQNGGPVGQFTYRSLHAMKKGIKDWWAPQGMFEDLGMKYIGPVDGHNLQAMEHALSTAKNYAGPVIVHAMTEKGHGYAPARAHEADQFHAVGIIDPETGVPTEAGGAQSWTSVFADEIAAIADERKDIVGITGAMLIPVGLHKFAARHPERVFDVGIAEQHALTSAAGMAFGGLHPVVAVYATFLNRAFDQLLMDVALHKAGVTIVLDRAGVTGPDGASHHGMWDMAMVQIVPGLHLAAPRDATRLREELREAVAIEDAPTVVRYSKGNVGAEVEALERLSDGVDVLARRPAGSSENDVLIVSVGAMSELALDVSNRLGAQGISSTVVDPRWLLPVRKSIIALAARHRLVICIEDGVRAGGVGSRIRQEMRAAGVDTALNEVGLPVEFLDHGTRAQVLERVGLTARQITHDVVAQVLGTKVPFARPLPGQEHPTTGSLPKL.

A thiamine diphosphate-binding site is contributed by His-73. Residues Arg-91–Val-110 are disordered. Positions Asp-101–Val-110 are enriched in basic and acidic residues. Ser-113–Ala-115 contacts thiamine diphosphate. Residue Asp-145 participates in Mg(2+) binding. Residues Gly-146 to Ala-147, Asn-175, Tyr-293, and Glu-375 each bind thiamine diphosphate. Asn-175 is a binding site for Mg(2+).

The protein belongs to the transketolase family. DXPS subfamily. Homodimer. Requires Mg(2+) as cofactor. Thiamine diphosphate is required as a cofactor.

It carries out the reaction D-glyceraldehyde 3-phosphate + pyruvate + H(+) = 1-deoxy-D-xylulose 5-phosphate + CO2. The protein operates within metabolic intermediate biosynthesis; 1-deoxy-D-xylulose 5-phosphate biosynthesis; 1-deoxy-D-xylulose 5-phosphate from D-glyceraldehyde 3-phosphate and pyruvate: step 1/1. In terms of biological role, catalyzes the acyloin condensation reaction between C atoms 2 and 3 of pyruvate and glyceraldehyde 3-phosphate to yield 1-deoxy-D-xylulose-5-phosphate (DXP). The chain is 1-deoxy-D-xylulose-5-phosphate synthase from Arthrobacter sp. (strain FB24).